The chain runs to 313 residues: Putative zinc finger protein 077L (313 aa).

The C3H1-type zinc-finger motif lies at 174-199 (CFSITKGIECPHYSCTYIHNYSQIEH). Residues 294-313 (SDDSDSENNDEDDDWKIDLF) are disordered. Residues 296–313 (DSDSENNDEDDDWKIDLF) are compositionally biased toward acidic residues.

The protein belongs to the IIV-6 077L family.

The chain is Putative zinc finger protein 077L from Invertebrate iridescent virus 6 (IIV-6).